Reading from the N-terminus, the 313-residue chain is Aspartate carbamoyltransferase catalytic subunit (313 aa).

Residues Arg-54 and Thr-55 each contribute to the carbamoyl phosphate site. Lys-82 is an L-aspartate binding site. Residues Arg-104, His-132, and Gln-135 each contribute to the carbamoyl phosphate site. The L-aspartate site is built by Arg-165 and Arg-219. Carbamoyl phosphate is bound by residues Gly-260 and Pro-261.

Belongs to the aspartate/ornithine carbamoyltransferase superfamily. ATCase family. In terms of assembly, heterododecamer (2C3:3R2) of six catalytic PyrB chains organized as two trimers (C3), and six regulatory PyrI chains organized as three dimers (R2).

It carries out the reaction carbamoyl phosphate + L-aspartate = N-carbamoyl-L-aspartate + phosphate + H(+). It functions in the pathway pyrimidine metabolism; UMP biosynthesis via de novo pathway; (S)-dihydroorotate from bicarbonate: step 2/3. Its function is as follows. Catalyzes the condensation of carbamoyl phosphate and aspartate to form carbamoyl aspartate and inorganic phosphate, the committed step in the de novo pyrimidine nucleotide biosynthesis pathway. The protein is Aspartate carbamoyltransferase catalytic subunit of Thermobifida fusca (strain YX).